We begin with the raw amino-acid sequence, 146 residues long: Large ribosomal subunit protein eL32 (146 aa).

It belongs to the eukaryotic ribosomal protein eL32 family.

The polypeptide is Large ribosomal subunit protein eL32 (rpl32e) (Methanocaldococcus jannaschii (strain ATCC 43067 / DSM 2661 / JAL-1 / JCM 10045 / NBRC 100440) (Methanococcus jannaschii)).